The sequence spans 486 residues: Nucleolar GTP-binding protein 2 (486 aa).

The interval 1–20 is disordered; it reads MGTGKKEKSRRIREGDTKDG. Residues Ser60, Ser85, and Ser155 each carry the phosphoserine modification. One can recognise a CP-type G domain in the interval 212–373; that stretch reads WNELYKVIDS…LIDCPGIVPP (162 aa). GTP-binding positions include 322 to 329 and 366 to 370; these read GYPNTGKS and DCPGI.

The protein belongs to the TRAFAC class YlqF/YawG GTPase family. NOG2 subfamily.

The protein localises to the nucleus. It localises to the nucleolus. GTPase that associates with pre-60S ribosomal subunits in the nucleolus and is required for their nuclear export and maturation. This is Nucleolar GTP-binding protein 2 (NOG2) from Saccharomyces cerevisiae (strain ATCC 204508 / S288c) (Baker's yeast).